Here is a 328-residue protein sequence, read N- to C-terminus: 4-hydroxythreonine-4-phosphate dehydrogenase (328 aa).

Substrate contacts are provided by histidine 134 and threonine 135. Histidine 164, histidine 209, and histidine 264 together coordinate a divalent metal cation. Residues lysine 272, asparagine 281, and arginine 290 each contribute to the substrate site.

Belongs to the PdxA family. Homodimer. Requires Zn(2+) as cofactor. Mg(2+) serves as cofactor. Co(2+) is required as a cofactor.

The protein resides in the cytoplasm. It carries out the reaction 4-(phosphooxy)-L-threonine + NAD(+) = 3-amino-2-oxopropyl phosphate + CO2 + NADH. It participates in cofactor biosynthesis; pyridoxine 5'-phosphate biosynthesis; pyridoxine 5'-phosphate from D-erythrose 4-phosphate: step 4/5. In terms of biological role, catalyzes the NAD(P)-dependent oxidation of 4-(phosphooxy)-L-threonine (HTP) into 2-amino-3-oxo-4-(phosphooxy)butyric acid which spontaneously decarboxylates to form 3-amino-2-oxopropyl phosphate (AHAP). The polypeptide is 4-hydroxythreonine-4-phosphate dehydrogenase (Shewanella denitrificans (strain OS217 / ATCC BAA-1090 / DSM 15013)).